The chain runs to 85 residues: Large ribosomal subunit protein bL27 (85 aa).

Positions 1 to 25 (MAHKKAGGSSRNGRDSHSKRLGVKH) are disordered.

This sequence belongs to the bacterial ribosomal protein bL27 family.

The sequence is that of Large ribosomal subunit protein bL27 from Buchnera aphidicola subsp. Baizongia pistaciae (strain Bp).